Reading from the N-terminus, the 945-residue chain is Endo-1,4-beta-xylanase 1 (945 aa).

Basic and acidic residues predominate over residues 16 to 41; sequence NGDRNPDKKSRESMEVSRKDNEEPEK. The tract at residues 16 to 50 is disordered; the sequence is NGDRNPDKKSRESMEVSRKDNEEPEKQNNNNVASI. 3 consecutive CBM-cenC domains span residues 57–197, 227–362, and 397–541; these read NVIV…EGPS, IVVN…IEGP, and NILT…GPSS. N-linked (GlcNAc...) asparagine glycans are attached at residues Asn86, Asn239, Asn305, Asn349, Asn417, Asn453, and Asn687. The region spanning 589–884 is the GH10 domain; that stretch reads SGASVRVRQI…NEAGKRFLAV (296 aa). Glu718 acts as the Proton donor in catalysis. The active-site Nucleophile is the Glu819.

It belongs to the glycosyl hydrolase 10 (cellulase F) family. Predominantly expressed in vascular bundles, but not in vessel cells. Mostly expressed in stems, at lower levels in roots, and weakly in inflorescences and seedlings.

It localises to the secreted. The protein resides in the cell wall. It catalyses the reaction Endohydrolysis of (1-&gt;4)-beta-D-xylosidic linkages in xylans.. Its pathway is glycan degradation; xylan degradation. Its function is as follows. Binds to and hydrolyzes insoluble and soluble xylan substrates. Exhibits xylanase activity. This Arabidopsis thaliana (Mouse-ear cress) protein is Endo-1,4-beta-xylanase 1.